Consider the following 360-residue polypeptide: uncharacterized protein (360 aa).

This is an uncharacterized protein from Escherichia coli (strain UTI89 / UPEC).